The following is an 80-amino-acid chain: Type VII secretion system accessory factor EsaB (80 aa).

Belongs to the EsaB family.

It localises to the cytoplasm. Functionally, seems to regulate secreted factors that contribute to the establishment of persistent infections in the host. This chain is Type VII secretion system accessory factor EsaB, found in Staphylococcus aureus (strain COL).